A 513-amino-acid chain; its full sequence is Microtubule-associated protein 70-5 (513 aa).

4 disordered regions span residues 1-20 (MTAA…SQLK), 60-81 (KLGA…LEEE), 347-367 (FLTS…GSVT), and 393-413 (ANGL…EDGN). Polar residues predominate over residues 9–18 (VSDTSSLQSQ). Residues 10 to 322 (SDTSSLQSQL…LKLRLKTIED (313 aa)) are a coiled coil. Residues 60 to 80 (KLGATENQVDQKELERKKLEE) show a composition bias toward basic and acidic residues. Positions 190-400 (FLEKINRQKV…ITANGLTDQH (211 aa)) are required for targeting to microtubules. The stretch at 426 to 501 (DRLQKEVIAL…EESKLCRKAK (76 aa)) forms a coiled coil.

This sequence belongs to the MAP70 family. In terms of assembly, interacts with MAP70.1 and itself.

The protein localises to the cytoplasm. It is found in the cytoskeleton. Functionally, plant-specific protein that interact with microtubules and regulates microtubule dynamics. May play a role in anisotropic cell expansion and organ growth. In association with MAP70.1, is essential for the normal banding pattern of secondary cell wall and for the proper development of xylem tracheary elements and wood formation. This Arabidopsis thaliana (Mouse-ear cress) protein is Microtubule-associated protein 70-5 (MAP70.5).